A 643-amino-acid chain; its full sequence is SURP and G-patch domain-containing protein 1 (643 aa).

Disordered regions lie at residues 48 to 69 (ARME…HPGE) and 97 to 119 (KAQT…SSLK). Position 128 is a phosphothreonine (threonine 128). Residues 187–229 (VIEKLARFVAEGGPELEKVAMEDYKDNPAFTFLHDKNSREFLY) form an SURP motif 1 repeat. A Phosphoserine modification is found at serine 252. An SURP motif 2 repeat occupies 262–305 (LAEKLARFIADGGPEVETIALQNNRENQAFSFLYDPNSQGYRYY). 2 disordered regions span residues 316–335 (KAGS…LRRK) and 360–393 (AVNP…DKVE). Phosphoserine is present on serine 322. The Nuclear localization signal signature appears at 378–384 (KRKRKSR). Phosphoserine is present on residues serine 407, serine 409, serine 412, and serine 483. The 48-residue stretch at 560 to 607 (VENIGYQMLMKMGWKEGEGLGTEGQGIKNPVNKGATTIDGAGFGIDRP) folds into the G-patch domain.

Component of the spliceosome.

The protein localises to the nucleus. Functionally, plays a role in pre-mRNA splicing. This Mus musculus (Mouse) protein is SURP and G-patch domain-containing protein 1 (Sugp1).